A 300-amino-acid polypeptide reads, in one-letter code: Ribosomal RNA small subunit methyltransferase H (300 aa).

Residues 46–48 (GGH), Asp-65, Phe-92, Asp-107, and Gln-114 contribute to the S-adenosyl-L-methionine site.

It belongs to the methyltransferase superfamily. RsmH family.

Its subcellular location is the cytoplasm. The catalysed reaction is cytidine(1402) in 16S rRNA + S-adenosyl-L-methionine = N(4)-methylcytidine(1402) in 16S rRNA + S-adenosyl-L-homocysteine + H(+). Its function is as follows. Specifically methylates the N4 position of cytidine in position 1402 (C1402) of 16S rRNA. This is Ribosomal RNA small subunit methyltransferase H from Prochlorococcus marinus (strain MIT 9312).